A 289-amino-acid chain; its full sequence is Rhodopsin (289 aa).

Residues 1-7 (YLVNPAA) lie on the Extracellular side of the membrane. A helical transmembrane segment spans residues 8 to 32 (YAALGAYMFLLILIGFPINFLTLYV). The Cytoplasmic portion of the chain corresponds to 33-44 (TLEHKKLRTPLN). Residues 45–67 (YILLNLAVGNLFMVLGGFTTTMY) traverse the membrane as a helical segment. At 68 to 81 (TSMHGYFVLGRLGC) the chain is on the extracellular side. Cysteine 81 and cysteine 158 are joined by a disulfide. Residues 82–104 (NLEGFFATLGGEIALWSLVVLAI) form a helical membrane-spanning segment. The 'Ionic lock' involved in activated form stabilization motif lies at 105–107 (ERW). Residues 105–123 (ERWIVVCKPISKFRFTEDH) lie on the Cytoplasmic side of the membrane. A helical membrane pass occupies residues 124 to 144 (AIMGLAFSWVMGLACAVPPLV). Residues 145 to 173 (GWSRYIPEGMKCSCGVDYYTRAEGFNNES) lie on the Extracellular side of the membrane. Asparagine 171 is a glycosylation site (N-linked (GlcNAc...) asparagine). A helical transmembrane segment spans residues 174-195 (FVIYMFIVHFLIPLSVIFFCYG). Residues 196–223 (RLLCAVKEAAAAQQESETTQRAEKEVSR) lie on the Cytoplasmic side of the membrane. The helical transmembrane segment at 224–245 (MVVIMVIGFLVCWLPYASVAWW) threads the bilayer. The Extracellular segment spans residues 246–257 (IFCNQGSDFGPI). A helical transmembrane segment spans residues 258–279 (FMTLPSFFAKRPAIYNPMIYIC). Lysine 267 is modified (N6-(retinylidene)lysine). The Cytoplasmic segment spans residues 280 to 289 (MNKQFRHCMI).

Belongs to the G-protein coupled receptor 1 family. Opsin subfamily. Phosphorylated on some or all of the serine and threonine residues present in the C-terminal region. Post-translationally, contains one covalently linked retinal chromophore.

The protein localises to the membrane. It localises to the cell projection. Its subcellular location is the cilium. The protein resides in the photoreceptor outer segment. Photoreceptor required for image-forming vision at low light intensity. While most salt water fish species use retinal as chromophore, most freshwater fish use 3-dehydroretinal, or a mixture of retinal and 3-dehydroretinal. Light-induced isomerization of 11-cis to all-trans retinal triggers a conformational change that activates signaling via G-proteins. Subsequent receptor phosphorylation mediates displacement of the bound G-protein alpha subunit by arrestin and terminates signaling. The sequence is that of Rhodopsin (rho) from Cottinella boulengeri (Short-headed sculpin).